The primary structure comprises 437 residues: Ribosomal protein uS12 methylthiotransferase RimO (437 aa).

The MTTase N-terminal domain occupies 9 to 124; the sequence is TKVNIVTLGC…LPAILKKFRA (116 aa). Residues C18, C56, C90, C151, C155, and C158 each coordinate [4Fe-4S] cluster. A Radical SAM core domain is found at 137–367; it reads TTPSHYAYVK…MSIQEGISAE (231 aa). Residues 370–437 enclose the TRAM domain; it reads EKKIGNTYKV…EFDLFGEIVK (68 aa).

Belongs to the methylthiotransferase family. RimO subfamily. Requires [4Fe-4S] cluster as cofactor.

It localises to the cytoplasm. It carries out the reaction L-aspartate(89)-[ribosomal protein uS12]-hydrogen + (sulfur carrier)-SH + AH2 + 2 S-adenosyl-L-methionine = 3-methylsulfanyl-L-aspartate(89)-[ribosomal protein uS12]-hydrogen + (sulfur carrier)-H + 5'-deoxyadenosine + L-methionine + A + S-adenosyl-L-homocysteine + 2 H(+). Its function is as follows. Catalyzes the methylthiolation of an aspartic acid residue of ribosomal protein uS12. In Cytophaga hutchinsonii (strain ATCC 33406 / DSM 1761 / CIP 103989 / NBRC 15051 / NCIMB 9469 / D465), this protein is Ribosomal protein uS12 methylthiotransferase RimO.